The sequence spans 303 residues: NAD kinase (303 aa).

The Proton acceptor role is filled by D85. NAD(+) contacts are provided by residues D85 to G86, N159 to D160, R187, D189, T200 to S205, A224, and Q258.

This sequence belongs to the NAD kinase family. A divalent metal cation serves as cofactor.

Its subcellular location is the cytoplasm. It carries out the reaction NAD(+) + ATP = ADP + NADP(+) + H(+). In terms of biological role, involved in the regulation of the intracellular balance of NAD and NADP, and is a key enzyme in the biosynthesis of NADP. Catalyzes specifically the phosphorylation on 2'-hydroxyl of the adenosine moiety of NAD to yield NADP. In Variovorax paradoxus (strain S110), this protein is NAD kinase.